Here is a 612-residue protein sequence, read N- to C-terminus: Oligopeptide transport ATP-binding protein OppD (612 aa).

One can recognise an ABC transporter 1 domain in the interval 5-255; sequence LEVTDLAVTF…RRMPYTVGLL (251 aa). Ser-43, Gly-44, Ser-45, Gly-46, Lys-47, Ser-48, Ala-49, Tyr-61, Gln-96, Arg-147, Gly-158, Glu-159, and His-213 together coordinate ATP. [4Fe-4S] cluster-binding residues include Cys-286, Cys-292, Cys-299, and Cys-317. Residues 350 to 600 enclose the ABC transporter 2 domain; sequence VRVRHLVKTY…PKHEYTRRLL (251 aa). ATP is bound by residues Ser-396, Gly-397, Ser-398, Gly-399, Lys-400, Ser-401, Thr-402, Gln-445, Arg-495, Glu-499, Gly-503, and His-558.

The protein belongs to the ABC transporter superfamily. The complex is composed of an ATP-binding protein (OppD), two transmembrane proteins (OppB and OppC) and a solute-binding protein (OppA).

Its subcellular location is the cell inner membrane. It catalyses the reaction a [peptide](out) + ATP + H2O = a [peptide](in) + ADP + phosphate + H(+). Part of the ABC transporter complex OppABCD involved in the uptake of oligopeptides. Responsible for energy coupling to the transport system. This chain is Oligopeptide transport ATP-binding protein OppD, found in Mycobacterium bovis (strain ATCC BAA-935 / AF2122/97).